Consider the following 87-residue polypeptide: Small ribosomal subunit protein bS20 (87 aa).

Basic residues predominate over residues 1-11; sequence MANIKSAKKRA. Residues 1-27 form a disordered region; the sequence is MANIKSAKKRAVQSEKRRQHNASQRSM.

Belongs to the bacterial ribosomal protein bS20 family.

In terms of biological role, binds directly to 16S ribosomal RNA. The sequence is that of Small ribosomal subunit protein bS20 from Histophilus somni (strain 129Pt) (Haemophilus somnus).